Reading from the N-terminus, the 242-residue chain is Probable derlin-1 homolog (242 aa).

Residues 1-18 (MDGVKEWFNSIPPVSRYM) lie on the Cytoplasmic side of the membrane. Residues 19–39 (FAIFLGIPVLAAMHLISFNYL) form a helical membrane-spanning segment. The Lumenal portion of the chain corresponds to 40 to 98 (YLDFTFTFKHFHLWRLITAPCIISSLGPMFLFNLIFFYQYTTRLESLNYAGKSDDYLFC). The helical transmembrane segment at 99-119 (IIFISICNIIFGLIFEYYFLG) threads the bilayer. Residues 120–140 (TMTIMSLIYIYSRMNPTGTSN) are Cytoplasmic-facing. A helical membrane pass occupies residues 141 to 161 (FYGFFSFKTIYLPWVFLVAHF). Residues 162-167 (LQTGHP) lie on the Lumenal side of the membrane. Residues 168–188 (PYSDFLAIVSGHIFFYLTDIY) traverse the membrane as a helical segment. The Cytoplasmic segment spans residues 189–242 (PRANGVPALIKTPKFITNIFNKGDRNPNNVRRDPRTGRPIQEGGYNWGQGHALG). Residues 214-224 (NPNNVRRDPRT) are compositionally biased toward basic and acidic residues. Residues 214–242 (NPNNVRRDPRTGRPIQEGGYNWGQGHALG) are disordered. Residues 233–242 (YNWGQGHALG) show a composition bias toward gly residues.

Belongs to the derlin family.

The protein resides in the endoplasmic reticulum membrane. Its function is as follows. May be involved in the degradation process of specific misfolded endoplasmic reticulum (ER) luminal proteins. May also involved in endoplasmic reticulum stress-induced pre-emptive quality control, a mechanism that selectively attenuates the translocation of newly synthesized proteins into the endoplasmic reticulum and reroutes them to the cytosol for proteasomal degradation. In Dictyostelium discoideum (Social amoeba), this protein is Probable derlin-1 homolog.